Here is a 465-residue protein sequence, read N- to C-terminus: Na(+)-translocating NADH-quinone reductase subunit A (465 aa).

Belongs to the NqrA family. As to quaternary structure, composed of six subunits; NqrA, NqrB, NqrC, NqrD, NqrE and NqrF.

The catalysed reaction is a ubiquinone + n Na(+)(in) + NADH + H(+) = a ubiquinol + n Na(+)(out) + NAD(+). Its function is as follows. NQR complex catalyzes the reduction of ubiquinone-1 to ubiquinol by two successive reactions, coupled with the transport of Na(+) ions from the cytoplasm to the periplasm. NqrA to NqrE are probably involved in the second step, the conversion of ubisemiquinone to ubiquinol. This is Na(+)-translocating NADH-quinone reductase subunit A from Chlamydia trachomatis serovar L2 (strain ATCC VR-902B / DSM 19102 / 434/Bu).